We begin with the raw amino-acid sequence, 136 residues long: Protein PsiE (136 aa).

Transmembrane regions (helical) follow at residues isoleucine 15–leucine 35, tyrosine 55–valine 75, phenylalanine 82–isoleucine 102, and proline 108–cysteine 128.

The protein belongs to the PsiE family.

Its subcellular location is the cell inner membrane. This Escherichia coli (strain SE11) protein is Protein PsiE.